The following is a 553-amino-acid chain: Solute carrier family 22 member 12 (553 aa).

A helical membrane pass occupies residues 16 to 36 (FQLLQAVALVTPILWVTTQNM). Residues N56, N102, and N107 are each glycosylated (N-linked (GlcNAc...) asparagine). 11 helical membrane passes run 146–166 (PMAQ…CGHA), 182–202 (LVSV…YCLF), 204–224 (FLVA…LMEW), 232–252 (LMMT…GSVA), 260–280 (MLQL…WWLP), 351–371 (FISM…ALDL), 378–398 (IFLL…GSLL), 407–427 (LCQA…ILVP), 435–455 (SSLA…VTIF), 466–486 (MTAV…GPLV), and 495–515 (WLPL…ALLL). S534 carries the phosphoserine modification.

It belongs to the major facilitator (TC 2.A.1) superfamily. Organic cation transporter (TC 2.A.1.19) family. In terms of assembly, interacts with PDZK1. In terms of processing, N-glycosylated. In terms of tissue distribution, expressed in the proximal tubular epithelial cells in kidney.

Its subcellular location is the apical cell membrane. The catalysed reaction is urate(out) + (S)-lactate(in) = urate(in) + (S)-lactate(out). It carries out the reaction nicotinate(in) + urate(out) = nicotinate(out) + urate(in). The enzyme catalyses urate(out) + n chloride(in) = urate(in) + n chloride(out). It catalyses the reaction orotate(out) + nicotinate(in) = orotate(in) + nicotinate(out). Functionally, electroneutral antiporter that translocates urate across the apical membrane of proximal tubular cells in exchange for monovalent organic or inorganic anions. Involved in renal reabsorption of urate and helps maintaining blood levels of uric acid. Mediates urate uptake by an exchange with organic anions such as (S)-lactate and nicotinate, and inorganic anion Cl(-). Other inorganic anions such as Br(-), I(-) and NO3(-) may also act as counteranions that exchange for urate. Also mediates orotate tubular uptake coupled with nicotinate efflux and to a lesser extent with lactate efflux, therefore displaying a potential role in orotate renal reabsorption. Orotate transport is Cl(-)-dependent. The chain is Solute carrier family 22 member 12 (Slc22a12) from Rattus norvegicus (Rat).